Here is a 43-residue protein sequence, read N- to C-terminus: Protein PsbN (43 aa).

The chain crosses the membrane as a helical span at residues alanine 4–tyrosine 24.

It belongs to the PsbN family.

The protein resides in the plastid. It localises to the chloroplast thylakoid membrane. In terms of biological role, may play a role in photosystem I and II biogenesis. The polypeptide is Protein PsbN (Trieres chinensis (Marine centric diatom)).